We begin with the raw amino-acid sequence, 1073 residues long: Duffy receptor alpha form (1073 aa).

A signal peptide spans 1 to 21 (MEGKKKRPLFFLLVLLLSHKA). Topologically, residues 22–1007 (NNVLFERMNG…YECFTKGSST (986 aa)) are extracellular. 3 N-linked (GlcNAc...) asparagine glycosylation sites follow: asparagine 134, asparagine 179, and asparagine 202. 2 disulfides stabilise this stretch: cysteine 214/cysteine 243 and cysteine 227/cysteine 234. N-linked (GlcNAc...) asparagine glycans are attached at residues asparagine 252 and asparagine 348. Disulfide bonds link cysteine 297-cysteine 374, cysteine 412-cysteine 429, cysteine 424-cysteine 504, and cysteine 433-cysteine 502. Residues 517 to 915 (VKNVGSGVES…LNNRKLNRDQ (399 aa)) are disordered. Polar residues predominate over residues 528–543 (AASSNPITEAVKSSSG). A compositionally biased stretch (basic and acidic residues) spans 546–561 (KVQEDSAHKSVNKGEG). Residues 562–576 (KSSTNEADPGSQSGA) show a composition bias toward polar residues. Basic and acidic residues-rich tracts occupy residues 675–710 (GEVH…DDRS) and 717–734 (HTDE…KDTE). Asparagine 679 carries an N-linked (GlcNAc...) asparagine glycan. A compositionally biased stretch (polar residues) spans 736 to 766 (AGGSTLTPEQNVSVASDNGNVPGSGNKQNEG). N-linked (GlcNAc...) asparagine glycans are attached at residues asparagine 746, asparagine 779, and asparagine 788. A compositionally biased stretch (basic and acidic residues) spans 799–810 (GNEKDFQKHDFM). Low complexity-rich tracts occupy residues 821-843 (SDHT…SSDH) and 851-864 (SDQT…SDQT). Residues 867-891 (TEGHHRDNVRNPEIKSSEDMSKGDF) show a composition bias toward basic and acidic residues. Residues 893 to 909 (RNSNSNELYSHNNLNNR) are compositionally biased toward polar residues. A helical transmembrane segment spans residues 1008-1029 (GIVYFATGGAFLIILLLFASWN). Over 1030 to 1073 (AASNDYEEEATFDEFVEYSDDIHRTPLMPNDIEHMQQFTPLDYS) the chain is Cytoplasmic.

Interacts (via region II) with human ACKR1 (via N-terminal extracellular domain). Interacts (via region II) with rhesus macaque ACKR1 (via N-terminal extracellular domain).

Its subcellular location is the cell membrane. It localises to the cytoplasmic vesicle. It is found in the secretory vesicle. The protein localises to the microneme. Its function is as follows. Binds to the human erythrocyte Duffy blood group determinant (ACKR1). Binds to the rhesus macaque erythrocyte Duffy blood group determinant (ACKR1). The protein is Duffy receptor alpha form of Plasmodium knowlesi.